Reading from the N-terminus, the 280-residue chain is DegV domain-containing protein M6_Spy1440 (280 aa).

The 278-residue stretch at 3-280 (WKIVTDSGCD…DGGLLMGYEI (278 aa)) folds into the DegV domain. 2 residues coordinate hexadecanoate: serine 63 and serine 91.

Functionally, may bind long-chain fatty acids, such as palmitate, and may play a role in lipid transport or fatty acid metabolism. In Streptococcus pyogenes serotype M6 (strain ATCC BAA-946 / MGAS10394), this protein is DegV domain-containing protein M6_Spy1440.